The primary structure comprises 679 residues: MPSEVTPKVPERPSRRKTSELFPLSGSESGDIKANSEPPTPAGTPNVPTRRPILKAKTMTSFESGMDQESLPKVPLQRPVRRSTTEELNNVMNNTSKELEEIESLISKHNIHNVSRKKSPTSVEEGKVAAIHQNGQRSASDNKTSTNPSPLEKNEHEGAEGNESAISPSNLVNKSNNEVTEHSDSEDLTEKQKVHAALDNEAGDRSHFEEKLIPGDMKVQVDVSKDVEEGSLNALPPSGITESDDKAEKFTKHPESSLEELQKHQEQQEEKIFQNPTDEESTTSLNEKQEGKDNMEVNSQPQGPSDTETVIAATSSNVPSQIASEEENDVPVIPRSRPKKDFEAHVQKEELPNTQEKRVSEECDSTLISTEEESKIPKIPSERPKRRAPPPVPKKPSSRIAAFQEMLQKQQQQDLHNNGNSSATTASADIAKKHTDSSITSDTTKADFTSKLNGLFALPGMVNPGQLPPSLEKKLSSPDTESKLGPQDQSQAKTGPLGGTRRGRGPRGRKLPSKVASVEKIEEDDNTNKIEIFNNWNVSSSFSKEKVLIDTTPGEQAERALDEKSKSIPEEQREQSPNKMEAALCPFELDEKEKLPANAESDPLSQLPQTNTVGNRKAISEESLSPSEAIANRDQNDTTEIQEQQMEDQMEVDMERELSGGYEDVDSALHSEEASFHSL.

The tract at residues 1–85 (MPSEVTPKVP…LQRPVRRSTT (85 aa)) is disordered. Residues 9 to 19 (VPERPSRRKTS) are compositionally biased toward basic and acidic residues. Thr18 carries the phosphothreonine modification. Ser36 bears the Phosphoserine mark. A Phosphothreonine modification is found at Thr58. Residue Ser70 is modified to Phosphoserine. The residue at position 85 (Thr85) is a Phosphothreonine. Phosphoserine is present on Ser104. Positions 110-119 (NIHNVSRKKS) are enriched in basic residues. 3 disordered regions span residues 110-522 (NIHN…EKIE), 549-580 (IDTTPGEQAERALDEKSKSIPEEQREQSPNKM), and 593-679 (EKLP…FHSL). 2 stretches are compositionally biased toward polar residues: residues 133-149 (QNGQRSASDNKTSTNPS) and 164-178 (SAISPSNLVNKSNNE). The span at 179-213 (VTEHSDSEDLTEKQKVHAALDNEAGDRSHFEEKLI) shows a compositional bias: basic and acidic residues. Phosphoserine is present on residues Ser183, Ser206, and Ser231. Over residues 243–272 (SDDKAEKFTKHPESSLEELQKHQEQQEEKI) the composition is skewed to basic and acidic residues. Residue Thr277 is modified to Phosphothreonine. Ser284 bears the Phosphoserine mark. The span at 296-323 (EVNSQPQGPSDTETVIAATSSNVPSQIA) shows a compositional bias: polar residues. Ser324 carries the post-translational modification Phosphoserine. 2 stretches are compositionally biased toward basic and acidic residues: residues 339–361 (KKDFEAHVQKEELPNTQEKRVSE) and 372–383 (EESKIPKIPSER). Residues 383-396 (RPKRRAPPPVPKKP) form an interaction with SH3 domain of ABP1 region. Composition is skewed to polar residues over residues 414-427 (DLHNNGNSSATTAS) and 437-452 (SSITSDTTKADFTSKL). A compositionally biased stretch (basic and acidic residues) spans 471–482 (LEKKLSSPDTES). Over residues 501 to 512 (RRGRGPRGRKLP) the composition is skewed to basic residues. Thr552 carries the phosphothreonine modification. Residues 556 to 576 (QAERALDEKSKSIPEEQREQS) are compositionally biased toward basic and acidic residues. Residue Ser576 is modified to Phosphoserine. Residues 603-614 (PLSQLPQTNTVG) are compositionally biased toward polar residues. Ser620, Ser623, Ser625, Ser627, Ser667, Ser671, Ser675, and Ser678 each carry phosphoserine. Over residues 667–679 (SALHSEEASFHSL) the composition is skewed to basic and acidic residues.

The protein belongs to the AIM21 family. In terms of assembly, interacts with ribosomes. Interacts with ABP1.

It is found in the cytoplasm. The protein resides in the cytoskeleton. It localises to the actin patch. Involved in mitochondrial migration along actin filaments. The polypeptide is Altered inheritance of mitochondria protein 21 (AIM21) (Saccharomyces cerevisiae (strain Lalvin EC1118 / Prise de mousse) (Baker's yeast)).